We begin with the raw amino-acid sequence, 407 residues long: Arginine deiminase (407 aa).

Catalysis depends on C397, which acts as the Amidino-cysteine intermediate.

The protein belongs to the arginine deiminase family.

It localises to the cytoplasm. It carries out the reaction L-arginine + H2O = L-citrulline + NH4(+). The protein operates within amino-acid degradation; L-arginine degradation via ADI pathway; carbamoyl phosphate from L-arginine: step 1/2. The polypeptide is Arginine deiminase (Limosilactobacillus fermentum (strain NBRC 3956 / LMG 18251) (Lactobacillus fermentum)).